The following is a 536-amino-acid chain: DEAD-box ATP-dependent RNA helicase 26 (536 aa).

The tract at residues 1–44 (MMSGGPSDATHRKRRRRRGPKGSGVDGPSIPRAVTTNGAGPEEE) is disordered. The segment covering 11–20 (HRKRRRRRGP) has biased composition (basic residues). A Q motif motif is present at residues 74-102 (TRFDQCPVSPLSLKAIKDAGYEKMTQVQE). The Helicase ATP-binding domain maps to 105–282 (LPIILQGEDV…HIAMKRGYKF (178 aa)). 118–125 (AKTGTGKT) lines the ATP pocket. A DEAD box motif is present at residues 230-233 (DEAD). One can recognise a Helicase C-terminal domain in the interval 316–466 (VLKKHIAEDA…SIQTGVKDAL (151 aa)).

The protein belongs to the DEAD box helicase family.

It carries out the reaction ATP + H2O = ADP + phosphate + H(+). The polypeptide is DEAD-box ATP-dependent RNA helicase 26 (Oryza sativa subsp. japonica (Rice)).